Reading from the N-terminus, the 1146-residue chain is Cell division cycle and apoptosis regulator protein 1 (1146 aa).

Residues 1-246 (MAQFGGQKNP…AQPQPQSLLQ (246 aa)) form an interaction with AR region. The tract at residues 200–657 (QRIQTLPNQN…RALSSKGLKS (458 aa)) is interaction with GATA2. The tract at residues 282–351 (IVSQPQPARR…RRERERSPRR (70 aa)) is disordered. Basic and acidic residues-rich tracts occupy residues 290-331 (RRLD…ERSP) and 338-349 (ERSPRRERERSP). Ser453 is modified (phosphoserine). Residues 591-615 (KQQLVEKLQGERKKADGEQDEEEKD) adopt a coiled-coil conformation. The disordered stretch occupies residues 599–635 (QGERKKADGEQDEEEKDDGEVKEIATPTHWSKLDPKA). The segment covering 608-618 (EQDEEEKDDGE) has biased composition (acidic residues). Position 624 is a phosphothreonine (Thr624). The 35-residue stretch at 633–667 (PKAMKVNDLRKELESRALSSKGLKSQLIARLTKQL) folds into the SAP domain. A Glycyl lysine isopeptide (Lys-Gly) (interchain with G-Cter in ubiquitin) cross-link involves residue Lys634. Residues 640 to 1146 (DLRKELESRA…EKSKENGSGV (507 aa)) form an interaction with GATA1 region. Residue Thr664 is modified to Phosphothreonine. 4 stretches are compositionally biased toward basic and acidic residues: residues 671 to 684 (EQKE…KSEK), 691 to 716 (DKKS…RQER), 793 to 814 (KEDK…KKEE), and 829 to 852 (SGDD…KDDS). Disordered stretches follow at residues 671–716 (EQKE…RQER) and 793–912 (KEDK…KEKP). Ser682 and Ser694 each carry phosphoserine. Acidic residues predominate over residues 853–884 (KDDDETEEDNNQDEYDPMEAEEAEDEDDDREE). Thr858 bears the Phosphothreonine mark. Positions 885–912 (EEVKRDDKRDVSRYCKDRPAKDKEKEKP) are enriched in basic and acidic residues. Lys1008 is covalently cross-linked (Glycyl lysine isopeptide (Lys-Gly) (interchain with G-Cter in SUMO1); alternate). Lys1008 is covalently cross-linked (Glycyl lysine isopeptide (Lys-Gly) (interchain with G-Cter in SUMO2); alternate). Residues 1029-1110 (DVGSLLQKLE…LQFENQLNKT (82 aa)) are a coiled coil. Residues Lys1063 and Lys1131 each participate in a glycyl lysine isopeptide (Lys-Gly) (interchain with G-Cter in SUMO2) cross-link.

Directly interacts with ESR1, NR3C1 and p53/TP53. Interacts (via N-terminus) with CALCOCO1. Interacts with MED1 and GATA1. Interacts with AR and GATA2.

It is found in the cytoplasm. Its subcellular location is the perinuclear region. In terms of biological role, associates with components of the Mediator and p160 coactivator complexes that play a role as intermediaries transducing regulatory signals from upstream transcriptional activator proteins to basal transcription machinery at the core promoter. Recruited to endogenous nuclear receptor target genes in response to the appropriate hormone. Also functions as a p53 coactivator. May thus play an important role in transcriptional regulation. May be involved in apoptosis signaling in the presence of the retinoid CD437. Apoptosis induction involves sequestration of 14-3-3 protein(s) and mediated altered expression of multiple cell cycle regulatory genes including MYC, CCNB1 and CDKN1A. Plays a role in cell cycle progression and/or cell proliferation. In association with CALCOCO1 enhances GATA1- and MED1-mediated transcriptional activation from the gamma-globin promoter during erythroid differentiation of K562 erythroleukemia cells. Can act as a both a coactivator and corepressor of AR-mediated transcription. Contributes to chromatin looping and AR transcription complex assembly by stabilizing AR-GATA2 association on chromatin and facilitating MED1 and RNA polymerase II recruitment to AR-binding sites. May play an important role in the growth and tumorigenesis of prostate cancer cells. The chain is Cell division cycle and apoptosis regulator protein 1 (Ccar1) from Mus musculus (Mouse).